Reading from the N-terminus, the 752-residue chain is MAP/microtubule affinity-regulating kinase 4 (752 aa).

The disordered stretch occupies residues 1–36 (MSSRTVLAPGNDRNSDTHGTLGSGRSSDKGPSWSSR). The Protein kinase domain occupies 59-310 (YRLLRTIGKG…LEQIMKDKWI (252 aa)). ATP-binding positions include 65–73 (IGKGNFAKV) and Lys-88. The active-site Proton acceptor is the Asp-181. Thr-214 carries the post-translational modification Phosphothreonine; by LKB1. Residues 324–368 (EPEEDFGDTKRIEVMVGMGYTREEIKESLTSQKYNEVTATYLLLG) form the UBA domain. The tract at residues 385–614 (ARVRAPSDTT…PAGRPRPTTN (230 aa)) is disordered. The segment covering 391-406 (SDTTNGTSSSKGTSHS) has biased composition (low complexity). Ser-423 and Ser-543 each carry phosphoserine. A compositionally biased stretch (low complexity) spans 544–553 (PSSHSLAPPS). In terms of domain architecture, KA1 spans 703–752 (AGGPEPLSHFEVEVCQLPRPGLRGVLFRRVAGTALAFRTLVTRISNDLEL).

The protein belongs to the protein kinase superfamily. CAMK Ser/Thr protein kinase family. SNF1 subfamily. Interacts with MAPT/TAU. Interacts with gamma-tubulin. Interacts with ODF2. Interacts with USP9X. Interacts with YWHAQ. Interacts with NLRP3; promoting NLRP3 recruitment to microtubule organizing center (MTOC). It depends on Mg(2+) as a cofactor. Ubiquitinated with 'Lys-29'- and 'Lys-33'-linked polyubiquitins which appear to impede LKB1-mediated phosphorylation. Deubiquitinated by USP9X. In terms of processing, phosphorylated at Thr-214 by STK11/LKB1 in complex with STE20-related adapter-alpha (STRADA) pseudo kinase and CAB39. Phosphorylated throughout the cell cycle. In terms of tissue distribution, ubiquitous. Isoform 2 is brain-specific. Expressed at highest levels in brain and testis. Also expressed in heart, lung, liver, muscle, kidney and spleen.

The protein localises to the cytoplasm. The protein resides in the cytoskeleton. It is found in the microtubule organizing center. It localises to the centrosome. Its subcellular location is the cilium basal body. The protein localises to the cilium axoneme. The protein resides in the cell projection. It is found in the dendrite. It carries out the reaction L-seryl-[protein] + ATP = O-phospho-L-seryl-[protein] + ADP + H(+). The catalysed reaction is L-threonyl-[protein] + ATP = O-phospho-L-threonyl-[protein] + ADP + H(+). Its activity is regulated as follows. Activated by phosphorylation on Thr-214. Functionally, serine/threonine-protein kinase. Phosphorylates the microtubule-associated protein MAPT/TAU. Also phosphorylates the microtubule-associated proteins MAP2 and MAP4. Involved in regulation of the microtubule network, causing reorganization of microtubules into bundles. Required for the initiation of axoneme extension during cilium assembly. Regulates the centrosomal location of ODF2 and phosphorylates ODF2 in vitro. Plays a role in cell cycle progression, specifically in the G1/S checkpoint. Reduces neuronal cell survival. Plays a role in energy homeostasis by regulating satiety and metabolic rate. Promotes adipogenesis by activating JNK1 and inhibiting the p38MAPK pathway, and triggers apoptosis by activating the JNK1 pathway. Phosphorylates mTORC1 complex member RPTOR and acts as a negative regulator of the mTORC1 complex, probably due to disruption of the interaction between phosphorylated RPTOR and the RRAGA/RRAGC heterodimer which is required for mTORC1 activation. Involved in NLRP3 positioning along microtubules by mediating NLRP3 recruitment to microtubule organizing center (MTOC) upon inflammasome activation. The sequence is that of MAP/microtubule affinity-regulating kinase 4 from Homo sapiens (Human).